A 166-amino-acid chain; its full sequence is Cyanate hydratase (166 aa).

Residues Arg-106, Glu-109, and Ser-132 contribute to the active site.

This sequence belongs to the cyanase family.

The catalysed reaction is cyanate + hydrogencarbonate + 3 H(+) = NH4(+) + 2 CO2. Its function is as follows. Catalyzes the reaction of cyanate with bicarbonate to produce ammonia and carbon dioxide. The polypeptide is Cyanate hydratase (Verticillium alfalfae (strain VaMs.102 / ATCC MYA-4576 / FGSC 10136) (Verticillium wilt of alfalfa)).